The following is an 815-amino-acid chain: Probable beta-glucosidase G (815 aa).

Positions 1–20 are cleaved as a signal peptide; it reads MASIAHLVVSGLLAATAVNG. N-linked (GlcNAc...) asparagine glycans are attached at residues N40, N58, N229, and N276. The active site involves D304. N343, N350, N402, N507, N563, N584, N623, N662, and N715 each carry an N-linked (GlcNAc...) asparagine glycan.

This sequence belongs to the glycosyl hydrolase 3 family.

Its subcellular location is the secreted. The catalysed reaction is Hydrolysis of terminal, non-reducing beta-D-glucosyl residues with release of beta-D-glucose.. It functions in the pathway glycan metabolism; cellulose degradation. Functionally, beta-glucosidases are one of a number of cellulolytic enzymes involved in the degradation of cellulosic biomass. Catalyzes the last step releasing glucose from the inhibitory cellobiose. This Aspergillus flavus (strain ATCC 200026 / FGSC A1120 / IAM 13836 / NRRL 3357 / JCM 12722 / SRRC 167) protein is Probable beta-glucosidase G (bglG).